The sequence spans 238 residues: Ribonuclease PH (238 aa).

Phosphate-binding positions include Arg-86 and 124-126 (GTR).

This sequence belongs to the RNase PH family. Homohexameric ring arranged as a trimer of dimers.

It carries out the reaction tRNA(n+1) + phosphate = tRNA(n) + a ribonucleoside 5'-diphosphate. Functionally, phosphorolytic 3'-5' exoribonuclease that plays an important role in tRNA 3'-end maturation. Removes nucleotide residues following the 3'-CCA terminus of tRNAs; can also add nucleotides to the ends of RNA molecules by using nucleoside diphosphates as substrates, but this may not be physiologically important. Probably plays a role in initiation of 16S rRNA degradation (leading to ribosome degradation) during starvation. This is Ribonuclease PH from Pectobacterium atrosepticum (strain SCRI 1043 / ATCC BAA-672) (Erwinia carotovora subsp. atroseptica).